Here is a 301-residue protein sequence, read N- to C-terminus: Glutamine amidotransferase-like protein GlxB (301 aa).

Cys2 is an active-site residue. Positions 2-298 constitute a Glutamine amidotransferase type-2 domain; the sequence is CGIVGLFLKD…PATVYFWDHQ (297 aa).

The sequence is that of Glutamine amidotransferase-like protein GlxB (glxB) from Rhizobium meliloti (strain 1021) (Ensifer meliloti).